The primary structure comprises 109 residues: Fluoride-specific ion channel FluC 1 (109 aa).

3 consecutive transmembrane segments (helical) span residues 21-41, 52-72, and 83-103; these read FYFK…GFFI, ILFS…HFLY, and LFIY…IGFQ.

This sequence belongs to the fluoride channel Fluc/FEX (TC 1.A.43) family.

The protein resides in the cell inner membrane. The enzyme catalyses fluoride(in) = fluoride(out). Its function is as follows. Fluoride-specific ion channel. Important for reducing fluoride concentration in the cell, thus reducing its toxicity. The protein is Fluoride-specific ion channel FluC 1 of Prochlorococcus marinus subsp. pastoris (strain CCMP1986 / NIES-2087 / MED4).